A 309-amino-acid chain; its full sequence is MPIRVLDELPAVNFLREENVFVMTTSRASGQEIRPLKVLILNLMPKKIETENQFLRLLSNSPLQVDIQLLRIDARESRNTPAEHLNNFYCNFDDICDQNFDGLIVTGAPLGLVEFNDVAYWPQIRQVLEWAKDHVTSTLFVCWAVQAALNILYGIPKQTRTDKLSGVYEHHILHPHALLTRGFDDSFLAPHSRYADFPAALIRDYTDLEILAETEEGDAYLFASKDKRIAFVTGHPEYDAHTLAGEYFRDVEAGLNPEVPYNYFPKNDPQNIPRATWRSHGNLLFTNWLNYYVYQITPYDLRHMNPTLD.

Cysteine 142 serves as the catalytic Acyl-thioester intermediate. Positions 163 and 192 each coordinate substrate. The active-site Proton acceptor is histidine 235. Glutamate 237 is an active-site residue. Residue arginine 249 coordinates substrate.

Belongs to the MetA family. As to quaternary structure, homodimer.

It is found in the cytoplasm. The catalysed reaction is L-homoserine + succinyl-CoA = O-succinyl-L-homoserine + CoA. It functions in the pathway amino-acid biosynthesis; L-methionine biosynthesis via de novo pathway; O-succinyl-L-homoserine from L-homoserine: step 1/1. In terms of biological role, transfers a succinyl group from succinyl-CoA to L-homoserine, forming succinyl-L-homoserine. The chain is Homoserine O-succinyltransferase from Salmonella choleraesuis (strain SC-B67).